Consider the following 231-residue polypeptide: Large ribosomal subunit protein uL1 (231 aa).

The protein belongs to the universal ribosomal protein uL1 family. Part of the 50S ribosomal subunit.

Binds directly to 23S rRNA. The L1 stalk is quite mobile in the ribosome, and is involved in E site tRNA release. In terms of biological role, protein L1 is also a translational repressor protein, it controls the translation of the L11 operon by binding to its mRNA. The sequence is that of Large ribosomal subunit protein uL1 from Verminephrobacter eiseniae (strain EF01-2).